Reading from the N-terminus, the 381-residue chain is Transaldolase 2 (381 aa).

Residue K141 is the Schiff-base intermediate with substrate of the active site.

The protein belongs to the transaldolase family. Type 2 subfamily.

It localises to the cytoplasm. It catalyses the reaction D-sedoheptulose 7-phosphate + D-glyceraldehyde 3-phosphate = D-erythrose 4-phosphate + beta-D-fructose 6-phosphate. It functions in the pathway carbohydrate degradation; pentose phosphate pathway; D-glyceraldehyde 3-phosphate and beta-D-fructose 6-phosphate from D-ribose 5-phosphate and D-xylulose 5-phosphate (non-oxidative stage): step 2/3. Functionally, transaldolase is important for the balance of metabolites in the pentose-phosphate pathway. This Nostoc punctiforme (strain ATCC 29133 / PCC 73102) protein is Transaldolase 2 (tal2).